The chain runs to 316 residues: Transaldolase (316 aa).

Lys-131 acts as the Schiff-base intermediate with substrate in catalysis.

The protein belongs to the transaldolase family. Type 1 subfamily. In terms of assembly, homodimer.

Its subcellular location is the cytoplasm. The enzyme catalyses D-sedoheptulose 7-phosphate + D-glyceraldehyde 3-phosphate = D-erythrose 4-phosphate + beta-D-fructose 6-phosphate. It participates in carbohydrate degradation; pentose phosphate pathway; D-glyceraldehyde 3-phosphate and beta-D-fructose 6-phosphate from D-ribose 5-phosphate and D-xylulose 5-phosphate (non-oxidative stage): step 2/3. Functionally, transaldolase is important for the balance of metabolites in the pentose-phosphate pathway. The chain is Transaldolase from Glaesserella parasuis serovar 5 (strain SH0165) (Haemophilus parasuis).